The chain runs to 367 residues: snRNA-activating protein complex subunit 1 (367 aa).

The tract at residues Met-1–Val-168 is SNAPC3-binding. The segment at Pro-164 to Lys-268 is SNAPC4-binding. Disordered stretches follow at residues Lys-228–Glu-254 and Lys-278–His-367. The span at Lys-238–Glu-254 shows a compositional bias: basic and acidic residues. Phosphoserine is present on residues Ser-289 and Ser-290. Over residues Cys-292–Val-301 the composition is skewed to polar residues.

Part of the SNAPc complex composed of 5 subunits: SNAPC1, SNAPC2, SNAPC3, SNAPC4 and SNAPC5. SNAPC1 interacts with SNAPC3, SNAPC4 and TBP.

It is found in the nucleus. Functionally, part of the SNAPc complex required for the transcription of both RNA polymerase II and III small-nuclear RNA genes. Binds to the proximal sequence element (PSE), a non-TATA-box basal promoter element common to these 2 types of genes. Recruits TBP and BRF2 to the U6 snRNA TATA box. The sequence is that of snRNA-activating protein complex subunit 1 (SNAPC1) from Macaca fascicularis (Crab-eating macaque).